Here is a 353-residue protein sequence, read N- to C-terminus: Peptide chain release factor 1 (353 aa).

N5-methylglutamine is present on Gln-230.

The protein belongs to the prokaryotic/mitochondrial release factor family. Post-translationally, methylated by PrmC. Methylation increases the termination efficiency of RF1.

Its subcellular location is the cytoplasm. Functionally, peptide chain release factor 1 directs the termination of translation in response to the peptide chain termination codons UAG and UAA. This chain is Peptide chain release factor 1, found in Leptospira biflexa serovar Patoc (strain Patoc 1 / ATCC 23582 / Paris).